Consider the following 208-residue polypeptide: MKKYWNRRKNRVEDFINKLTSQLSKLFPDAIFIFEDLDKFNMYDKNSNFNRNLDRTNWRKIAKKLEYKSVVLYVNPHYTSKTCPVCGSKMKSQEGQVVKCDKCGIFDRQFVRCYNIFKRGVELAKKLLGGVGVPVAGAEVDDLLSNEPRGELRLVKPNPNVEAKLPVRKSNRRFELQNPKDFVQIFDFPLMVYTVDLNGKYLKIYNCP.

Residues C83, C86, C100, and C103 each coordinate Zn(2+).

Belongs to the transposase 35 family.

The chain is TnpB-like protein MJ0012 from Methanocaldococcus jannaschii (strain ATCC 43067 / DSM 2661 / JAL-1 / JCM 10045 / NBRC 100440) (Methanococcus jannaschii).